Consider the following 643-residue polypeptide: Phosphomethylpyrimidine synthase (643 aa).

Residues N248, M277, Y306, H342, 362–364 (SRG), 403–406 (DGLR), and E442 each bind substrate. H446 contacts Zn(2+). Y469 contacts substrate. H510 provides a ligand contact to Zn(2+). Residues C590, C593, and C598 each coordinate [4Fe-4S] cluster.

This sequence belongs to the ThiC family. As to quaternary structure, homodimer. The cofactor is [4Fe-4S] cluster.

It catalyses the reaction 5-amino-1-(5-phospho-beta-D-ribosyl)imidazole + S-adenosyl-L-methionine = 4-amino-2-methyl-5-(phosphooxymethyl)pyrimidine + CO + 5'-deoxyadenosine + formate + L-methionine + 3 H(+). It participates in cofactor biosynthesis; thiamine diphosphate biosynthesis. Its function is as follows. Catalyzes the synthesis of the hydroxymethylpyrimidine phosphate (HMP-P) moiety of thiamine from aminoimidazole ribotide (AIR) in a radical S-adenosyl-L-methionine (SAM)-dependent reaction. The polypeptide is Phosphomethylpyrimidine synthase (Burkholderia ambifaria (strain MC40-6)).